Here is a 348-residue protein sequence, read N- to C-terminus: NADH-cytochrome b5 reductase 2 (348 aa).

A helical transmembrane segment spans residues 41 to 61 (TLLYGAAAAAVAGAGYYFLGG). The FAD-binding FR-type domain maps to 97-202 (QGWVSLKLEE…KGPLPKYPWT (106 aa)). Position 205–240 (205–240 (KHGHIALVAGGTGITPMFQLCRAIFNNPDDQTKVTL)) interacts with FAD.

This sequence belongs to the flavoprotein pyridine nucleotide cytochrome reductase family. It depends on FAD as a cofactor.

It is found in the mitochondrion outer membrane. The enzyme catalyses 2 Fe(III)-[cytochrome b5] + NADH = 2 Fe(II)-[cytochrome b5] + NAD(+) + H(+). In terms of biological role, may mediate the reduction of outer membrane cytochrome b5. In Chaetomium globosum (strain ATCC 6205 / CBS 148.51 / DSM 1962 / NBRC 6347 / NRRL 1970) (Soil fungus), this protein is NADH-cytochrome b5 reductase 2 (MCR1).